The following is a 629-amino-acid chain: tRNA uridine 5-carboxymethylaminomethyl modification enzyme MnmG (629 aa).

Residues 14–19 (GAGHAG), Val126, and Ser181 each bind FAD. Residue 273-287 (GPRYCPSIEDKVVRF) coordinates NAD(+). Gln370 is a binding site for FAD.

This sequence belongs to the MnmG family. In terms of assembly, homodimer. Heterotetramer of two MnmE and two MnmG subunits. It depends on FAD as a cofactor.

It localises to the cytoplasm. Its function is as follows. NAD-binding protein involved in the addition of a carboxymethylaminomethyl (cmnm) group at the wobble position (U34) of certain tRNAs, forming tRNA-cmnm(5)s(2)U34. This Bacillus cereus (strain ATCC 10987 / NRS 248) protein is tRNA uridine 5-carboxymethylaminomethyl modification enzyme MnmG.